A 1089-amino-acid chain; its full sequence is Carbamoyl phosphate synthase large chain (1089 aa).

The interval 1 to 399 (MPKRTDIKSI…SIQKALCSLE (399 aa)) is carboxyphosphate synthetic domain. ATP-binding residues include Arg127, Arg167, Gly173, Gly174, Glu206, Leu208, Glu213, Gly239, Val240, His241, Gln283, and Glu297. The ATP-grasp 1 domain occupies 131–326 (KECMKKIGMD…IAKVATLLAV (196 aa)). Mg(2+) is bound by residues Gln283, Glu297, and Asn299. Positions 283, 297, and 299 each coordinate Mn(2+). Residues 400–553 (RSLSGFDRVK…NVSELTQSKN (154 aa)) are oligomerization domain. The carbamoyl phosphate synthetic domain stretch occupies residues 554-951 (DAKDKKEKKV…SYAKSQIASF (398 aa)). In terms of domain architecture, ATP-grasp 2 spans 680–871 (AEFITKLGIN…LAKVATRVMW (192 aa)). Positions 716, 755, 757, 762, 787, 788, 789, 790, 830, and 842 each coordinate ATP. Mg(2+) contacts are provided by Gln830, Glu842, and Asn844. The Mn(2+) site is built by Gln830, Glu842, and Asn844. In terms of domain architecture, MGS-like spans 952 to 1089 (NHLPEQGVVF…VKSLQEWLKS (138 aa)). The segment at 952–1089 (NHLPEQGVVF…VKSLQEWLKS (138 aa)) is allosteric domain.

It belongs to the CarB family. In terms of assembly, composed of two chains; the small (or glutamine) chain promotes the hydrolysis of glutamine to ammonia, which is used by the large (or ammonia) chain to synthesize carbamoyl phosphate. Tetramer of heterodimers (alpha,beta)4. The cofactor is Mg(2+). Mn(2+) is required as a cofactor.

The enzyme catalyses hydrogencarbonate + L-glutamine + 2 ATP + H2O = carbamoyl phosphate + L-glutamate + 2 ADP + phosphate + 2 H(+). It carries out the reaction hydrogencarbonate + NH4(+) + 2 ATP = carbamoyl phosphate + 2 ADP + phosphate + 2 H(+). It participates in amino-acid biosynthesis; L-arginine biosynthesis; carbamoyl phosphate from bicarbonate: step 1/1. Its pathway is pyrimidine metabolism; UMP biosynthesis via de novo pathway; (S)-dihydroorotate from bicarbonate: step 1/3. Large subunit of the glutamine-dependent carbamoyl phosphate synthetase (CPSase). CPSase catalyzes the formation of carbamoyl phosphate from the ammonia moiety of glutamine, carbonate, and phosphate donated by ATP, constituting the first step of 2 biosynthetic pathways, one leading to arginine and/or urea and the other to pyrimidine nucleotides. The large subunit (synthetase) binds the substrates ammonia (free or transferred from glutamine from the small subunit), hydrogencarbonate and ATP and carries out an ATP-coupled ligase reaction, activating hydrogencarbonate by forming carboxy phosphate which reacts with ammonia to form carbamoyl phosphate. The sequence is that of Carbamoyl phosphate synthase large chain from Campylobacter jejuni subsp. jejuni serotype O:2 (strain ATCC 700819 / NCTC 11168).